The primary structure comprises 460 residues: NADH-ubiquinone oxidoreductase chain 4 (460 aa).

The next 13 helical transmembrane spans lie at 22–42 (WLWS…LSWF), 59–79 (IDPL…LMIL), 94–113 (RIYI…AFSA), 117–139 (ILFY…RWGN), 148–168 (TYFL…LLFM), 195–215 (FWWT…GVHL), 231–251 (ILAA…IIML), 258–278 (MAYP…SICL), 286–306 (MIAY…LIQT), 310–330 (FAGA…LFCL), 343–362 (LLLA…WWLL), 394–414 (ILLT…MFLM), and 436–456 (LLLT…ELIW).

Belongs to the complex I subunit 4 family.

It is found in the mitochondrion membrane. It catalyses the reaction a ubiquinone + NADH + 5 H(+)(in) = a ubiquinol + NAD(+) + 4 H(+)(out). Core subunit of the mitochondrial membrane respiratory chain NADH dehydrogenase (Complex I) that is believed to belong to the minimal assembly required for catalysis. Complex I functions in the transfer of electrons from NADH to the respiratory chain. The immediate electron acceptor for the enzyme is believed to be ubiquinone. This chain is NADH-ubiquinone oxidoreductase chain 4 (MTND4), found in Scyliorhinus canicula (Small-spotted catshark).